We begin with the raw amino-acid sequence, 833 residues long: Protein translocase subunit SecA (833 aa).

ATP contacts are provided by residues glutamine 87, 105 to 109 (GEGKT), and aspartate 494. The interval 789-816 (PAAVAYSGGEAEAGPAQPHREDPKVGRN) is disordered. A compositionally biased stretch (basic and acidic residues) spans 806–815 (PHREDPKVGR). The Zn(2+) site is built by cysteine 819, cysteine 821, cysteine 830, and cysteine 831.

The protein belongs to the SecA family. Monomer and homodimer. Part of the essential Sec protein translocation apparatus which comprises SecA, SecYEG and auxiliary proteins SecDF-YajC and YidC. Requires Zn(2+) as cofactor.

Its subcellular location is the cell inner membrane. The protein localises to the cytoplasm. It carries out the reaction ATP + H2O + cellular proteinSide 1 = ADP + phosphate + cellular proteinSide 2.. In terms of biological role, part of the Sec protein translocase complex. Interacts with the SecYEG preprotein conducting channel. Has a central role in coupling the hydrolysis of ATP to the transfer of proteins into and across the cell membrane, serving as an ATP-driven molecular motor driving the stepwise translocation of polypeptide chains across the membrane. The chain is Protein translocase subunit SecA from Nitratidesulfovibrio vulgaris (strain DP4) (Desulfovibrio vulgaris).